Here is a 226-residue protein sequence, read N- to C-terminus: Orotate phosphoribosyltransferase (226 aa).

5-phospho-alpha-D-ribose 1-diphosphate is bound by residues R107, K108, K111, and 133-141 (EDLTTDGGS). Position 137 (T137) interacts with orotate.

It belongs to the purine/pyrimidine phosphoribosyltransferase family. PyrE subfamily. Homodimer. The cofactor is Mg(2+).

It carries out the reaction orotidine 5'-phosphate + diphosphate = orotate + 5-phospho-alpha-D-ribose 1-diphosphate. It functions in the pathway pyrimidine metabolism; UMP biosynthesis via de novo pathway; UMP from orotate: step 1/2. Catalyzes the transfer of a ribosyl phosphate group from 5-phosphoribose 1-diphosphate to orotate, leading to the formation of orotidine monophosphate (OMP). The sequence is that of Orotate phosphoribosyltransferase from Dinoroseobacter shibae (strain DSM 16493 / NCIMB 14021 / DFL 12).